Consider the following 336-residue polypeptide: Poly(A) RNA polymerase cid12 (336 aa).

2 residues coordinate Mg(2+): D77 and D79. A PAP-associated domain is found at 209–263 (ALLQKFFYFWGVEWTYELFVLRPLTGQIVPKLQKGWLNEVQPNLLSIEDPIDRNN). At S325 the chain carries Phosphoserine. The residue at position 327 (T327) is a Phosphothreonine. Phosphoserine is present on S329.

This sequence belongs to the DNA polymerase type-B-like family. As to quaternary structure, cid12, hrr1 and rdp1 interact forming the RNA-directed RNA polymerase complex (RDRC). The RDRC complex interacts with the RITS complex via interaction between ago1 and hrr1. Clr4 has a role in mediating this interaction. Requires Mg(2+) as cofactor. The cofactor is Mn(2+).

Its subcellular location is the cytoplasm. It localises to the nucleus. The enzyme catalyses RNA(n) + ATP = RNA(n)-3'-adenine ribonucleotide + diphosphate. Its function is as follows. Has a role in the RNA interference (RNAi) pathway which is important for heterochromatin formation and accurate chromosome segregation. A member of the RNA-directed RNA polymerase complex (RDRC) which is involved in the generation of small interfering RNAs (siRNAs) and mediate their association with the RNA-induced transcriptional silencing (RITS) complex. RITS acts as a priming complex for dsRNA synthesis at the site of non-coding centromeric RNA. This Schizosaccharomyces pombe (strain 972 / ATCC 24843) (Fission yeast) protein is Poly(A) RNA polymerase cid12 (cid12).